The sequence spans 508 residues: Cytochrome P450 monooxygenase orf4 (508 aa).

Cys-447 contributes to the heme binding site.

It belongs to the cytochrome P450 family. Requires heme as cofactor.

The protein operates within mycotoxin biosynthesis. Cytochrome P450 monooxygenase; part of the gene cluster that mediates the biosynthesis of brefeldin A (BFA), a protein transport inhibitor that shows antiviral, antifungal, and antitumor properties. The proposed biosynthesis of BFA involves formation of an acyclic polyketide chain that is differentially tailored throughout the backbone. The highly reducing polyketide synthase Bref-PKS is proposed to synthesize the precisely reduced octaketide precursor, which could then be directly offloaded by the thiohydrolase enzyme Bref-TH followed by a cytochrome P450 monooxygenase-mediated formation of the cyclopentane ring and macrocyclization to afford 7-deoxy BFA. Alternatively, the first ring annulation can also occur on the ACP-tethered intermediate before the thiohydrolase release and lactonization. The C7-hydroxylation by another cytochrome P450 monooxygenase is believed to be the final step in the process to obtain the final structure of BFA. In addition to the HRPKS Bref-PKS and the thiohydrolase Bref-TH, the brefeldin A biosynthesis cluster contains 4 cytochrome p450 monooxygenases (called orf3 to orf6), as well a the probable cluster-specific transcription regulator orf8. This chain is Cytochrome P450 monooxygenase orf4, found in Eupenicillium brefeldianum (Penicillium brefeldianum).